The following is a 124-amino-acid chain: Salivary protein 15 Iric-3 (124 aa).

Positions 1 to 22 (MESFVAMKVVCIILLFVIAAEA) are cleaved as a signal peptide. N-linked (GlcNAc...) asparagine glycosylation is found at N82 and N93. The segment at 105 to 124 (GPNNQTCHKKDECVGYIPGC) is CD4-binding.

Belongs to the salp15 family. Interacts with host CD4. Interacts with host DC-SIGN (CD209). Interacts with Borrelia outer surface protein C (OspC). Expressed in salivary glands. Detected in fed adult female.

It localises to the secreted. In terms of biological role, salivary tick protein that downregulates host immune system by binding to both dendritic cells, and CD4(+) T cells. Specifically binds to the CD4 coreceptor on T cells. This interaction prevents the activation of the Src kinase, Lck, and its downstream substrate Zap-70, and results in deficient activation of PLCgamma1, the repression of calcium fluxes triggered by T-cell antigen receptor (TCR) ligation, and a subsequent reduction in interleukin-2 production. This salivary protein also binds to DC-SIGN (CD209) on dendritic cells (DC) and activates the Raf-1 kinase/MEK signaling pathway that results in down-regulating expression of pro-inflammatory cytokines. Furthermore, it inhibits T cell proliferation induced by DCs. In addition, it inhibits in vitro keratinocyte inflammation induced by Borrelia burgdorferi or by the major outer surface protein (OspC) of Borrelia. In addition, it downregulates chemokines and monocyte chemoattractant protein 1, as well as several antimicrobial peptides such as defensins, cathelicidin, psoriasin, and RNase 7. Apart from its immunomodulatory activities, it is also associated with protection of Borrelia spirochetes from antibody-mediated killing through its binding to OspC. In vivo, tests on different immune disease animal models show promising therapeutic results, e.g., in inhibiting HIV infection, experimental autoimmune encephalomyelitis, transplantation rejection, and asthma. The protein is Salivary protein 15 Iric-3 of Ixodes ricinus (Common tick).